A 393-amino-acid chain; its full sequence is Formate-dependent phosphoribosylglycinamide formyltransferase (393 aa).

N(1)-(5-phospho-beta-D-ribosyl)glycinamide contacts are provided by residues Glu-22 to Leu-23 and Glu-82. ATP is bound by residues Arg-114, Lys-155, Ser-160–Gln-165, Glu-195–Val-198, and Glu-203. An ATP-grasp domain is found at Arg-119 to Leu-308. Glu-267 and Glu-279 together coordinate Mg(2+). N(1)-(5-phospho-beta-D-ribosyl)glycinamide is bound by residues Asp-286, Lys-356, and Arg-363–Arg-364.

The protein belongs to the PurK/PurT family. As to quaternary structure, homodimer.

It catalyses the reaction N(1)-(5-phospho-beta-D-ribosyl)glycinamide + formate + ATP = N(2)-formyl-N(1)-(5-phospho-beta-D-ribosyl)glycinamide + ADP + phosphate + H(+). It participates in purine metabolism; IMP biosynthesis via de novo pathway; N(2)-formyl-N(1)-(5-phospho-D-ribosyl)glycinamide from N(1)-(5-phospho-D-ribosyl)glycinamide (formate route): step 1/1. Its function is as follows. Involved in the de novo purine biosynthesis. Catalyzes the transfer of formate to 5-phospho-ribosyl-glycinamide (GAR), producing 5-phospho-ribosyl-N-formylglycinamide (FGAR). Formate is provided by PurU via hydrolysis of 10-formyl-tetrahydrofolate. This Hydrogenovibrio crunogenus (strain DSM 25203 / XCL-2) (Thiomicrospira crunogena) protein is Formate-dependent phosphoribosylglycinamide formyltransferase.